A 275-amino-acid polypeptide reads, in one-letter code: uncharacterized protein (275 aa).

Residues Thr148 to Pro158 are compositionally biased toward polar residues. Residues Thr148–Glu173 are disordered. Residues Ile187 to Glu207 form a helical membrane-spanning segment. The disordered stretch occupies residues Gly234–Ala264. The span at Asp245–Pro261 shows a compositional bias: polar residues.

It localises to the membrane. This is an uncharacterized protein from Homo sapiens (Human).